The following is a 662-amino-acid chain: Glycogen debranching enzyme (662 aa).

The active-site Nucleophile is aspartate 338. Glutamate 373 (proton donor) is an active-site residue.

It belongs to the glycosyl hydrolase 13 family.

The enzyme catalyses Hydrolysis of (1-&gt;6)-alpha-D-glucosidic linkages to branches with degrees of polymerization of three or four glucose residues in limit dextrin.. It functions in the pathway glycan degradation; glycogen degradation. Functionally, removes maltotriose and maltotetraose chains that are attached by 1,6-alpha-linkage to the limit dextrin main chain, generating a debranched limit dextrin. This chain is Glycogen debranching enzyme, found in Yersinia pseudotuberculosis serotype I (strain IP32953).